The primary structure comprises 181 residues: MAANENRLVWLDMEMTGLDPEKERIIEVAVVVTEADLTVVAEGPVLVVHQPDSLLDAMDNWNKSTHGKSGLIEKVKASTLGEAQAEQILLEFLAEHVPAGKSPLCGNTISQDRRFMYAYMPNLERFFHYRNLDVSTLKELARRWAPAVYKGFDKKSRHEALADIYESIDELKYYREHLLKV.

In terms of domain architecture, Exonuclease spans 8-171; the sequence is LVWLDMEMTG…ADIYESIDEL (164 aa). The active site involves Y129.

It belongs to the oligoribonuclease family.

The protein resides in the cytoplasm. In terms of biological role, 3'-to-5' exoribonuclease specific for small oligoribonucleotides. This is Oligoribonuclease from Bordetella bronchiseptica (strain ATCC BAA-588 / NCTC 13252 / RB50) (Alcaligenes bronchisepticus).